The following is a 160-amino-acid chain: Major allergen Pru ar 1 (160 aa).

This sequence belongs to the BetVI family.

This is Major allergen Pru ar 1 from Prunus armeniaca (Apricot).